The sequence spans 272 residues: NAD kinase (272 aa).

Residue aspartate 62 is the Proton acceptor of the active site. Residues 62 to 63 (DG), arginine 67, 129 to 130 (NE), arginine 140, lysine 157, aspartate 159, isoleucine 167, 170 to 175 (SSYSSS), alanine 194, and glutamine 229 each bind NAD(+).

It belongs to the NAD kinase family. A divalent metal cation is required as a cofactor.

Its subcellular location is the cytoplasm. The enzyme catalyses NAD(+) + ATP = ADP + NADP(+) + H(+). Involved in the regulation of the intracellular balance of NAD and NADP, and is a key enzyme in the biosynthesis of NADP. Catalyzes specifically the phosphorylation on 2'-hydroxyl of the adenosine moiety of NAD to yield NADP. The protein is NAD kinase of Thermoplasma acidophilum (strain ATCC 25905 / DSM 1728 / JCM 9062 / NBRC 15155 / AMRC-C165).